The chain runs to 196 residues: MIPVVIEQTSRGERSYDIYSRLLKDRIIMLTGPVEDNMANSIIAQLLFLDAQDNTKDIYLYINSPGGSVSAGLAIVDTMNFIKSDVQTIVMGIAASMGTIIASSGAKGKRFMLPNAEYLIHQPMGGTGGGTQQSDMAIAAEQLLKTRKKLEKILSDNSGKTIKQIHKDAERDYWMDAKETLKYGFIDEIMENNELK.

The active-site Nucleophile is Ser96. His121 is an active-site residue.

This sequence belongs to the peptidase S14 family. Fourteen ClpP subunits assemble into 2 heptameric rings which stack back to back to give a disk-like structure with a central cavity, resembling the structure of eukaryotic proteasomes.

The protein localises to the cytoplasm. It catalyses the reaction Hydrolysis of proteins to small peptides in the presence of ATP and magnesium. alpha-casein is the usual test substrate. In the absence of ATP, only oligopeptides shorter than five residues are hydrolyzed (such as succinyl-Leu-Tyr-|-NHMec, and Leu-Tyr-Leu-|-Tyr-Trp, in which cleavage of the -Tyr-|-Leu- and -Tyr-|-Trp bonds also occurs).. Cleaves peptides in various proteins in a process that requires ATP hydrolysis. Has a chymotrypsin-like activity. Plays a major role in the degradation of misfolded proteins. The protein is ATP-dependent Clp protease proteolytic subunit of Streptococcus mutans serotype c (strain ATCC 700610 / UA159).